The chain runs to 485 residues: Vacuolar fusion protein CCZ1 homolog (485 aa).

The protein belongs to the CCZ1 family. In terms of assembly, component of the Mon1-Ccz1 guanyl-nucleotide exchange factor complex made up of Mon1, Ccz1 and Bulli; the interaction of Bulli with the Mon1-Ccz1 heterodimer is mediated via the C-terminal Mic1 domain of Bulli. Mon1 and Ccz1 form a stable complex which displays Rab7 GEF activity with or without Bulli; GEF activity is enhanced by Bulli possibly by improving membrane association of the complex. Interacts with Rab5 and Rab7; preferentially binds GTP-bound Rab5 and GDP-bound Rab7.

It is found in the cytoplasm. The protein resides in the cytosol. The Rab7 guanyl-nucleotide exchange factor (GEF) activity of the Mon1-Ccz1 complex is autoinhibited by the N-terminal disordered region of Mon1. GEF activity is stimulated by Rab5-mediated recruitment to membranes. Its function is as follows. Part of the Mon1-Ccz1 guanyl-nucleotide exchange factor complex specific for Rab7 that promotes the exchange of GDP to GTP, converting Rab7 from an inactive GDP-bound form into an active GTP-bound form. Required for recruitment of Rab7 to endosomal and autophagosomal membranes to mediate endolysosomal and autolysosomal vesicle maturation. Required for fusion of multivesicular bodies and lysosomes but not their formation or trafficking. Involved in the replacement of Rab5 (and possibly Rab4) with Rab7, also known as Rab conversion or the Rab cascade, during endosomal maturation. The Mon1-Ccz1 complex is recruited to phosphatidylinositol 3-phosphate (PtdIns[3]P) enriched membranes by Rab5, which stimulates recruitment and guanyl-nucleotide exchange of Rab7. Together with Rab7 required for autolysosome formation in fat cells and autophagic degradation during starvation-induced basal and developmental autophagy. This Drosophila melanogaster (Fruit fly) protein is Vacuolar fusion protein CCZ1 homolog.